Consider the following 493-residue polypeptide: Argininosuccinate lyase (493 aa).

The protein belongs to the lyase 1 family. Argininosuccinate lyase subfamily.

Its subcellular location is the cytoplasm. It catalyses the reaction 2-(N(omega)-L-arginino)succinate = fumarate + L-arginine. The protein operates within amino-acid biosynthesis; L-arginine biosynthesis; L-arginine from L-ornithine and carbamoyl phosphate: step 3/3. The polypeptide is Argininosuccinate lyase (Clavibacter sepedonicus (Clavibacter michiganensis subsp. sepedonicus)).